Reading from the N-terminus, the 168-residue chain is Crossover junction endodeoxyribonuclease RuvC (168 aa).

Residues Asp-7, Glu-66, and Asp-138 contribute to the active site. Asp-7, Glu-66, and Asp-138 together coordinate Mg(2+).

This sequence belongs to the RuvC family. In terms of assembly, homodimer which binds Holliday junction (HJ) DNA. The HJ becomes 2-fold symmetrical on binding to RuvC with unstacked arms; it has a different conformation from HJ DNA in complex with RuvA. In the full resolvosome a probable DNA-RuvA(4)-RuvB(12)-RuvC(2) complex forms which resolves the HJ. It depends on Mg(2+) as a cofactor.

It localises to the cytoplasm. The catalysed reaction is Endonucleolytic cleavage at a junction such as a reciprocal single-stranded crossover between two homologous DNA duplexes (Holliday junction).. In terms of biological role, the RuvA-RuvB-RuvC complex processes Holliday junction (HJ) DNA during genetic recombination and DNA repair. Endonuclease that resolves HJ intermediates. Cleaves cruciform DNA by making single-stranded nicks across the HJ at symmetrical positions within the homologous arms, yielding a 5'-phosphate and a 3'-hydroxyl group; requires a central core of homology in the junction. The consensus cleavage sequence is 5'-(A/T)TT(C/G)-3'. Cleavage occurs on the 3'-side of the TT dinucleotide at the point of strand exchange. HJ branch migration catalyzed by RuvA-RuvB allows RuvC to scan DNA until it finds its consensus sequence, where it cleaves and resolves the cruciform DNA. This is Crossover junction endodeoxyribonuclease RuvC from Cereibacter sphaeroides (strain ATCC 17029 / ATH 2.4.9) (Rhodobacter sphaeroides).